A 137-amino-acid polypeptide reads, in one-letter code: MRNFDLSPLYRSAIGFDRLFNALEAGQSQGNGGYPPYNVELVDENHYRIAIAVAGFAEQELEITTQDNLLIVRGAHNNEPAERTYLYQGIAERNFERKFQLAEHIQIKGAKLENGLLYIDMERIVPETLKPRRIEIK.

One can recognise a sHSP domain in the interval 28-137 (SQGNGGYPPY…TLKPRRIEIK (110 aa)).

It belongs to the small heat shock protein (HSP20) family. In terms of assembly, monomer. Forms homomultimers of about 100-150 subunits at optimal growth temperatures. Conformation changes to monomers at high temperatures or high ionic concentrations.

It localises to the cytoplasm. In terms of biological role, associates with aggregated proteins, together with IbpB, to stabilize and protect them from irreversible denaturation and extensive proteolysis during heat shock and oxidative stress. Aggregated proteins bound to the IbpAB complex are more efficiently refolded and reactivated by the ATP-dependent chaperone systems ClpB and DnaK/DnaJ/GrpE. Its activity is ATP-independent. This chain is Small heat shock protein IbpA, found in Serratia proteamaculans (strain 568).